Consider the following 1581-residue polypeptide: MFLCFCAATVLCFWINSGGADVVPNGTLIFSEPVPYPFSLDVLRSFSQHVVLRNKRAVTTISWSYSYQITTSSLSVNSWYVTFTAPLGWNYYTGQSFGTVLNQNAMMRASQSTFTYDVISYVGQRPNLDCQVNSLVNGGLDGWYSTVRVDNCFNAPCHVGGRPGCSIGLPYMSNGVCTRVLSTTQSPGLQYEIYSGQQFAVYQITPYTQYTITMPSGILGYCQQTPLYVDCGTWTPFRVHSYGCDKVTQNCKYTLTSNWVVAFQNKATAVILPSELIVPVAQKVTRRLGVNTPDYFWLVKQAYHYLSQANLSPNYALFSALCNSLYQQSATLSTLCFGSPFFVAQECYNNALYLPDAVFTTLFSTLFSWDYQINYPLNQVLTQNETFLQLPATNYQGQTLSQGRMLNLFKDAIVFLDFFDTKFYRTNDAPSSDIFVVVARQAQLIRYGNFRIEQINGYFQVKCSSNIISTLEPHPAGVIMIARHHSMWSVAARNSTSFYCVTHSLTTFGKLDISTSWFFHTLALPSGPVSQVSMPLLSTAAVGVYMHPMIEHWIPLLTLAQSQYQPSFFNIGINKTITLTTQLQAYAQVYTAWFLSVIYVRLPEARRLTLGVQLVPFIQALLSIKQADLDATDVDSVARYNVLSLMWGRKYAVVNYNQLPEWTYPLFKGEIGESMWFRKKIMPTTEGCQTSAHFSSITGYLQFSDYVYIPKYNKVSCPISTLAPSVLQVYEVQSLFVILIQCVSGSYDWYPGLSGGTAFVYKSYKLGTVCVLLPSDVLSTGPNIGFYSGTALSIVTVQTTNDVLPNCIGLVQDNIFTPCHPSGCPVRNSYDNYIVCFDSSTYTFKNYHRTTPPVMNVPIQEVPLQMEIPTVILQSYELKHTESVLLQDIEGGIIVDHNTGSIWYPDGQAYDVSFYVSVIIRYAPPKLELPSTLANFTSCLDYICFGNYQCRTEAQTFCTSMDYFEQVFNKSLISLKTALQDLHYVLKLVLPETTLELTELTRRRRRAVYEFDDTISLLSESFERFMSPASQAYMANMLWWDDAFDGFSLPQRTGSILSRSPSLSSVSSWNSYTSRTPLISNVKTPKTTFNVKLSMPKLPKASTLSKIGSVLSSGLSIASLGLSIFSIVEDRRVTELTQQQIMALEDQITILTDYTEKNFKEIQSSLNTLGQQVQDFSQQVTMSLQQLSNGLEQITQQLDKSIYYVTATQQYATYMSSLINHLTELAAAVYKTQDMYVTCIHSLQSGVLSPNCITPSQIFQLYQVARNLSGQCQPIFSEREVSRFYSLPLVTDAMVHNDTYWFSWSIPITCSNIQGSVYKVQPGYIVNPTHPTSLQYDLPSHVVTSNAGALRFDDHYCDRYNQVYLCTKSAFDLQPSNYLTMLYSNISENVSLTFHPEPRPDPCVYLSSSALYCYYSDQCNQCVVAVGNCSNQTVTYRNYTYPIMDPQCRGFDQITISSPIDIGVDFTALPSRPPLPLHLSYVNVTFNVTIPHGLNWTDLVLDYSFKDKIYEISKNITDLHQQILQVSSWASGWFQRIRDFLYNLLPTWITWLTLGFSLFSIVISGINIILFFEMNGKVKKS.

An N-terminal signal peptide occupies residues 1-20 (MFLCFCAATVLCFWINSGGA). At 21-1551 (DVVPNGTLIF…YNLLPTWITW (1531 aa)) the chain is on the virion surface side. N-linked (GlcNAc...) asparagine; by host glycans are attached at residues asparagine 25, asparagine 384, asparagine 494, asparagine 574, asparagine 935, asparagine 969, asparagine 1267, asparagine 1297, asparagine 1385, asparagine 1389, asparagine 1428, asparagine 1431, asparagine 1438, asparagine 1483, asparagine 1487, asparagine 1495, and asparagine 1515. Residues 1552-1572 (LTLGFSLFSIVISGINIILFF) traverse the membrane as a helical segment. At 1573–1581 (EMNGKVKKS) the chain is on the intravirion side.

It belongs to the toroviruses spike protein family. Homotrimer.

The protein localises to the virion membrane. Its function is as follows. Mediates the binding of virions to the host cell receptor and is involved in membrane fusion. In Berne virus (BEV), this protein is Spike glycoprotein (S).